Consider the following 534-residue polypeptide: MGRGGKRTWYNGDRREAKRNRPNSIYNGEGRPENLVVGEKKPKRKVACLVGYCGSGYHGMQLNPPSKTIEGDLFDAFVKAGAVSSYNADDPKKVALARAARTDKGVHAAGNVISLKLIMEDEKLIEKVNEHLPPSIRLWDVIRTINSFNPRTYCESRIYEYMVPTYAFVPPKPSSILGNCIMKNSPMPAEPINKENINQLSRSLFYEEGKEFWDDYDIAAKEILSLYEQDPEGFVNPYSKRGAAALANSENNKGSEAGVSAKTNPDMDSDSSAIVNEFLKPDSVEDESAGSKIDPSYRLERALKHIEVLKLKNYRISADRLSVIRETLNQYVGVHNFHNFTVGQAFHQKNSNRVIRSFTASDPFMIGDTEWISCKVHGQSFMLHQIRKMIALAILVVRTGCPVERIQDAFKKTKINIPKGPGFGLLLESPFFKGYNEHKAPENNRDPIDFTKYEQKITAFKHAHIYDKIFLEEARKQVFHCFLSFIDSYNEEDFSYLSDIGITEKTQEVSSKLPDVLSSDEEEDSAENKDDLEG.

The segment at 1-32 (MGRGGKRTWYNGDRREAKRNRPNSIYNGEGRP) is disordered. Catalysis depends on aspartate 103, which acts as the Nucleophile. 2 disordered regions span residues 246 to 271 (LANSENNKGSEAGVSAKTNPDMDSDS) and 507 to 534 (QEVSSKLPDVLSSDEEEDSAENKDDLEG). Serine 518, serine 519, and serine 525 each carry phosphoserine.

It belongs to the tRNA pseudouridine synthase TruA family. Zn(2+) serves as cofactor.

The protein resides in the nucleus. The enzyme catalyses a uridine in tRNA = a pseudouridine in tRNA. The catalysed reaction is uridine in snRNA = pseudouridine in snRNA. It catalyses the reaction a uridine in mRNA = a pseudouridine in mRNA. Formation of pseudouridine at positions 27 and 28 in the anticodon stem and loop of transfer RNAs; at positions 34 and 36 of intron-containing precursor tRNA(Ile) and at position 35 in the intron-containing tRNA(Tyr). Catalyzes pseudouridylation at position 44 in U2 snRNA. Also catalyzes pseudouridylation of mRNAs. The polypeptide is tRNA pseudouridine synthase 1 (pus1) (Schizosaccharomyces pombe (strain 972 / ATCC 24843) (Fission yeast)).